We begin with the raw amino-acid sequence, 293 residues long: Protease HtpX homolog (293 aa).

2 helical membrane passes run 4 to 24 and 40 to 60; these read VILF…TLRI and ALLM…LLIS. His-146 serves as a coordination point for Zn(2+). Residue Glu-147 is part of the active site. His-150 provides a ligand contact to Zn(2+). 2 helical membrane-spanning segments follow: residues 161 to 181 and 198 to 218; these read LIQG…GYFV and VTVI…VAWF. A Zn(2+)-binding site is contributed by Glu-223.

This sequence belongs to the peptidase M48B family. The cofactor is Zn(2+).

The protein resides in the cell inner membrane. The protein is Protease HtpX homolog of Bordetella avium (strain 197N).